The sequence spans 241 residues: tRNA (guanine-N(7)-)-methyltransferase (241 aa).

Residues Glu76, Glu101, Asp128, and Asp150 each contribute to the S-adenosyl-L-methionine site. Asp150 is a catalytic residue. Residues Lys154, Asp186, and 219–222 (TRYE) contribute to the substrate site.

It belongs to the class I-like SAM-binding methyltransferase superfamily. TrmB family.

It carries out the reaction guanosine(46) in tRNA + S-adenosyl-L-methionine = N(7)-methylguanosine(46) in tRNA + S-adenosyl-L-homocysteine. The protein operates within tRNA modification; N(7)-methylguanine-tRNA biosynthesis. Catalyzes the formation of N(7)-methylguanine at position 46 (m7G46) in tRNA. The polypeptide is tRNA (guanine-N(7)-)-methyltransferase (Cereibacter sphaeroides (strain ATCC 17023 / DSM 158 / JCM 6121 / CCUG 31486 / LMG 2827 / NBRC 12203 / NCIMB 8253 / ATH 2.4.1.) (Rhodobacter sphaeroides)).